Consider the following 828-residue polypeptide: Periplasmic nitrate reductase (828 aa).

The tat-type signal signal peptide spans 1-31; it reads MKLSRRSFMKANAVAAAAAAAGLSVPGVARA. Residues 39–95 enclose the 4Fe-4S Mo/W bis-MGD-type domain; it reads IKWDKAPCRFCGTGCGVLVGTQQGRVVACQGDPDAPVNRGLNCIKGYFLPKIMYGKD. 4 residues coordinate [4Fe-4S] cluster: Cys-46, Cys-49, Cys-53, and Cys-81. Mo-bis(molybdopterin guanine dinucleotide)-binding positions include Lys-83, Gln-150, Asn-175, Cys-179, 212–219, 243–247, 262–264, Met-372, Gln-376, Asn-482, 508–509, Lys-531, Asp-558, and 718–727; these read WGSNMAEM, STFQH, QSD, SD, and TGRVLEHWHT. Phe-794 contacts substrate. Residues Asn-802 and Lys-819 each coordinate Mo-bis(molybdopterin guanine dinucleotide).

This sequence belongs to the prokaryotic molybdopterin-containing oxidoreductase family. NasA/NapA/NarB subfamily. As to quaternary structure, component of the periplasmic nitrate reductase NapAB complex composed of NapA and NapB. Requires [4Fe-4S] cluster as cofactor. The cofactor is Mo-bis(molybdopterin guanine dinucleotide). Post-translationally, predicted to be exported by the Tat system. The position of the signal peptide cleavage has not been experimentally proven.

The protein resides in the periplasm. It carries out the reaction 2 Fe(II)-[cytochrome] + nitrate + 2 H(+) = 2 Fe(III)-[cytochrome] + nitrite + H2O. Catalytic subunit of the periplasmic nitrate reductase complex NapAB. Receives electrons from NapB and catalyzes the reduction of nitrate to nitrite. The sequence is that of Periplasmic nitrate reductase from Salmonella paratyphi A (strain ATCC 9150 / SARB42).